We begin with the raw amino-acid sequence, 143 residues long: Flagellar assembly factor FliW (143 aa).

This sequence belongs to the FliW family. As to quaternary structure, interacts with flagellin in a 1:1 complex. Two molecules interact with each CsrA dimer; cannot interact with both flagellin and CsrA simultaneously. Has a higher affinity for CsrA than for flagellin. Interacts directly with flagellin (hag), forms a 3-way complex of Hag, FliS and FliW in which Flis and FliW do not directly interact. Interaction with Hag may occur via the C-terminus of Hag.

The protein resides in the cytoplasm. In terms of biological role, acts as an anti-CsrA protein, binds CsrA and prevents it from repressing translation of its target genes, one of which is flagellin. Binds to flagellin (hag), which is implicated in polymerization, and participates in the assembly of the flagellum. An antagonist to translational regulator CsrA, it binds CsrA at an allosteric site and non-competitively inhibits CsrA binding to hag RNA. Partner switching by flagellin between FliW and CsrA provides a flagellar assembly checkpoint to tightly control the timing of flagellin synthesis. Flagellin binds to assembly factor FliW, freeing translation regulator CsrA to repress translation of the flagellin mRNA. When the flagellar hook is assembled flagellin is secreted, depleting intracellular flagellin, which frees FliW to interact with CsrA and inhibits CsrA binding to mRNA. This derepresses flagellin translation and provides protein for flagellar assembly. Once the flagellar filament is completed cytoplasmic flagellin levels rise and CsrA translation repression of flagellin reinitiates. Binds to CsrA and displaces it from hag mRNA. Binds to hag mRNA itself, but only at much higher concentrations than those required to displace CsrA. In Bacillus subtilis (strain 168), this protein is Flagellar assembly factor FliW.